The primary structure comprises 198 residues: Zinc finger protein 41 (198 aa).

A compositionally biased stretch (basic residues) spans 1 to 12 (MEKPATRKKKSQ). The interval 1–56 (MEKPATRKKKSQAPKEEAGAQKATVKGEKTSKGKKATKKPRKPRRPRKEPVLSPED) is disordered. The span at 13–31 (APKEEAGAQKATVKGEKTS) shows a compositional bias: basic and acidic residues. Positions 32–47 (KGKKATKKPRKPRRPR) are enriched in basic residues. 4 C2H2-type zinc fingers span residues 87 to 109 (YECG…QRVH), 115 to 137 (FKCD…QRIH), 143 to 165 (FKCG…QKTH), and 171 to 193 (YGCE…RKRH).

Belongs to the krueppel C2H2-type zinc-finger protein family. Predominantly in the spermatocytes and spermatids of testes. It is also expressed in the fetus and embryonic stem cells at lower levels.

The protein resides in the nucleus. Its function is as follows. A putative DNA-binding regulatory protein associated with meiosis in spermatogenesis. This is Zinc finger protein 41 (Zfp41) from Mus musculus (Mouse).